Reading from the N-terminus, the 382-residue chain is Enoyl-[acyl-carrier-protein] reductase, mitochondrial (382 aa).

The N-terminal 17 residues, 1–17 (MSSFLSKRFLSFSQRAM), are a transit peptide targeting the mitochondrion. Catalysis depends on Y77, which acts as the Proton donor. Residues N159, 187 to 190 (TSSV), 210 to 212 (RDR), 285 to 288 (YGGM), 310 to 312 (FWV), and K375 each bind NADP(+).

It belongs to the zinc-containing alcohol dehydrogenase family. Quinone oxidoreductase subfamily. Homodimer.

The protein resides in the mitochondrion matrix. The catalysed reaction is a 2,3-saturated acyl-[ACP] + NADP(+) = a (2E)-enoyl-[ACP] + NADPH + H(+). Catalyzes the NADPH-dependent reduction of trans-2-enoyl thioesters in mitochondrial fatty acid synthesis (fatty acid synthesis type II). Fatty acid chain elongation in mitochondria uses acyl carrier protein (ACP) as an acyl group carrier, but the enzyme accepts both ACP and CoA thioesters as substrates in vitro. Required for respiration and the maintenance of the mitochondrial compartment. This is Enoyl-[acyl-carrier-protein] reductase, mitochondrial (ETR1) from Kluyveromyces lactis (strain ATCC 8585 / CBS 2359 / DSM 70799 / NBRC 1267 / NRRL Y-1140 / WM37) (Yeast).